A 100-amino-acid polypeptide reads, in one-letter code: Elicitin Vex2 (100 aa).

3 cysteine pairs are disulfide-bonded: Cys3–Cys71, Cys27–Cys56, and Cys51–Cys95.

The protein belongs to the elicitin family.

The protein resides in the secreted. In terms of biological role, induces local and distal defense responses (incompatible hypersensitive reaction) in plants from the solanaceae and cruciferae families. Elicits leaf necrosis and causes the accumulation of pathogenesis-related proteins. Might interact with the lipidic molecules of the plasma membrane. The chain is Elicitin Vex2 from Phytopythium vexans (Damping-off fungus).